The primary structure comprises 481 residues: O-phosphoseryl-tRNA(Sec) selenium transferase (481 aa).

Positions 1–36 (MKANFGKKEGEYSRLVSKSSNKLLNSLWEKKQIPEE) are tetramerization. Position 69 (Arg69) interacts with pyridoxal 5'-phosphate. The interval 90–100 (GRSGNLLEIQP) is phosphate loop (P-loop). Positions 91, 92, and 99 each coordinate substrate. Lys277 is modified (N6-(pyridoxal phosphate)lysine). Arg306 provides a ligand contact to substrate.

The protein belongs to the SepSecS family. As to quaternary structure, homotetramer formed by a catalytic dimer and a non-catalytic dimer serving as a binding platform that orients tRNASec for catalysis. Each tetramer binds the CCA ends of two tRNAs which point to the active sites of the catalytic dimer. Pyridoxal 5'-phosphate is required as a cofactor.

The protein localises to the cytoplasm. It catalyses the reaction O-phospho-L-seryl-tRNA(Sec) + selenophosphate + H2O = L-selenocysteinyl-tRNA(Sec) + 2 phosphate. It participates in aminoacyl-tRNA biosynthesis; selenocysteinyl-tRNA(Sec) biosynthesis; selenocysteinyl-tRNA(Sec) from L-seryl-tRNA(Sec) (archaeal/eukaryal route): step 2/2. Functionally, converts O-phosphoseryl-tRNA(Sec) to selenocysteinyl-tRNA(Sec) required for selenoprotein biosynthesis. The polypeptide is O-phosphoseryl-tRNA(Sec) selenium transferase (secs-1) (Caenorhabditis elegans).